Here is a 330-residue protein sequence, read N- to C-terminus: Polygalacturonase inhibitor 2 (330 aa).

The first 21 residues, methionine 1 to alanine 21, serve as a signal peptide directing secretion. Intrachain disulfides connect cysteine 25–cysteine 55 and cysteine 56–cysteine 63. LRR repeat units follow at residues asparagine 69 to leucine 93, proline 94 to lysine 117, leucine 118 to glutamine 141, leucine 142 to leucine 166, arginine 167 to glycine 192, valine 194 to proline 215, phenylalanine 217 to alanine 237, lysine 238 to leucine 260, alanine 261 to alanine 285, and phenylalanine 287 to glutamine 308. Asparagine 106, asparagine 120, and asparagine 130 each carry an N-linked (GlcNAc...) asparagine glycan. An N-linked (GlcNAc...) asparagine glycan is attached at asparagine 291. Cystine bridges form between cysteine 298-cysteine 320 and cysteine 322-cysteine 329.

Belongs to the polygalacturonase-inhibiting protein family.

The protein resides in the secreted. It is found in the cell wall. It localises to the membrane. In terms of biological role, inhibitor of fungal polygalacturonase. It is an important factor for plant resistance to phytopathogenic fungi. The sequence is that of Polygalacturonase inhibitor 2 (PGIP2) from Arabidopsis thaliana (Mouse-ear cress).